The primary structure comprises 242 residues: Small ribosomal subunit protein uS2 (242 aa).

It belongs to the universal ribosomal protein uS2 family.

This chain is Small ribosomal subunit protein uS2, found in Tolumonas auensis (strain DSM 9187 / NBRC 110442 / TA 4).